A 640-amino-acid chain; its full sequence is MTYSLLPHIHSPQDLHALSLDKLPVLCDEIRNKIIESLSLTGGHLASNLGGVELTVALHYVFSSPDDQFIFDVGHQSYVHKLLTGRNTEAFSNIRHDNGLSGFTTPQESNHDIFFSGHAGNALSLALGLAKGSSNSSSHILPILGDAAFSCGLTLEALNNIPADLSKFIIVLNDNQMSISENVGNIPQGISHWMYPQKISKLSQKIHSWIQNLPSFLHKKKTLSHKVDIALKSLSHPLFEQFGLHYVGPIDGHNVKKLVQALQMIKDQPQPILFHVCTVKGNGLAEAERDPIRYHGVKAHFQNTSLKKTSGNVELQTPISFPQHAGNILCRLGKKYPQLQVVTPAMSLGSCLEDFRKQFPDRFTDVGIAEGHAVTFSAGIARSGTPVCCSIYSTFLHRAMDNVFHDVCMQELPVIFAIDRAGLAFHDGRSHHGIYDLGFLCSMPNMVICQPRNALVLERLFFSSLLWKSPCAIRYPNIPANEKASNSFFPFSPILPGEAEILCQGDDLLLIALGHMCNTALTVKEHLLDYGISTTVVDPIFIKPLDRKLLQSLLTHHSKVIILEEHSIHGGLGSEFLLFLNQHNIKADVLSLGVPDMFIPHGNPETILNLIGLTSDHITQRILSHFKFFTPIPIERFFKA.

Residues His-75 and 117-119 each bind thiamine diphosphate; that span reads GHA. Residue Asp-146 coordinates Mg(2+). Thiamine diphosphate is bound by residues 147–148, Asn-175, and Glu-370; that span reads AA. Asn-175 contacts Mg(2+).

This sequence belongs to the transketolase family. DXPS subfamily. As to quaternary structure, homodimer. It depends on Mg(2+) as a cofactor. Thiamine diphosphate is required as a cofactor.

It catalyses the reaction D-glyceraldehyde 3-phosphate + pyruvate + H(+) = 1-deoxy-D-xylulose 5-phosphate + CO2. Its pathway is metabolic intermediate biosynthesis; 1-deoxy-D-xylulose 5-phosphate biosynthesis; 1-deoxy-D-xylulose 5-phosphate from D-glyceraldehyde 3-phosphate and pyruvate: step 1/1. Its function is as follows. Catalyzes the acyloin condensation reaction between C atoms 2 and 3 of pyruvate and glyceraldehyde 3-phosphate to yield 1-deoxy-D-xylulose-5-phosphate (DXP). In Chlamydia trachomatis serovar A (strain ATCC VR-571B / DSM 19440 / HAR-13), this protein is 1-deoxy-D-xylulose-5-phosphate synthase.